The chain runs to 134 residues: MNRRDLLLQEMGISQWELYRPEVLQGSVGISVAENIRLITVSDENISSSPLLADVLLSLNLKKENCLCLNYDQIQHMECKQPIRYWLLSENSDQIDRTLPFCKQAEQVYRSPSWQQFQSNHQAKRALWQQIQQP.

This sequence belongs to the DNA polymerase III psi/HolD chain family. DNA polymerase III contains a core (composed of alpha, epsilon and theta chains) that associates with a tau subunit. This core dimerizes to form the POLIII' complex. PolIII' associates with the gamma complex (composed of gamma, delta, delta', psi and chi chains) and with the beta chain to form the complete DNA polymerase III complex. Interacts directly with the chi subunit (holC).

The catalysed reaction is DNA(n) + a 2'-deoxyribonucleoside 5'-triphosphate = DNA(n+1) + diphosphate. Functionally, part of the beta sliding clamp loading complex, which hydrolyzes ATP to load the beta clamp onto primed DNA to form the DNA replication pre-initiation complex. DNA polymerase III is a complex, multichain enzyme responsible for most of the replicative synthesis in bacteria. This DNA polymerase also exhibits 3' to 5' exonuclease activity. In Haemophilus influenzae (strain ATCC 51907 / DSM 11121 / KW20 / Rd), this protein is DNA polymerase III subunit psi (holD).